A 398-amino-acid chain; its full sequence is Protein trichome birefringence-like 45 (398 aa).

The chain crosses the membrane as a helical; Signal-anchor for type II membrane protein span at residues 1 to 21 (MAAVQCLTFLFLFLLQNATSA). Positions 131 to 133 (GDS) match the GDS motif motif. The short motif at 375–389 (DCSHWCLPGLPDTWN) is the DCXHWCLPGXXDXWN motif element.

It belongs to the PC-esterase family. TBL subfamily.

The protein resides in the membrane. Functionally, may act as a bridging protein that binds pectin and other cell wall polysaccharides. Probably involved in maintaining esterification of pectins. May be involved in the specific O-acetylation of cell wall polymers. The chain is Protein trichome birefringence-like 45 (TBL45) from Arabidopsis thaliana (Mouse-ear cress).